The primary structure comprises 741 residues: Transketolase, chloroplastic (741 aa).

Residues 1–67 (MASSSSLTLS…TKQQFSVRAS (67 aa)) constitute a chloroplast transit peptide. Position 103 (His103) interacts with substrate. Residues His143 and 192–194 (GPL) each bind thiamine diphosphate. Asp233 provides a ligand contact to Mg(2+). The thiamine diphosphate site is built by Gly234 and Asn263. 2 residues coordinate Mg(2+): Asn263 and Ile265. 3 residues coordinate substrate: His340, Arg434, and Ser461. Position 340 (His340) interacts with thiamine diphosphate. Residues Glu488 and Phe515 each contribute to the thiamine diphosphate site. Residue Glu488 is the Proton donor of the active site. His539, Asp547, and Arg598 together coordinate substrate.

Belongs to the transketolase family. As to quaternary structure, homodimer. Requires Mg(2+) as cofactor. It depends on Ca(2+) as a cofactor. Mn(2+) is required as a cofactor. Co(2+) serves as cofactor. The cofactor is thiamine diphosphate.

Its subcellular location is the plastid. The protein resides in the chloroplast thylakoid membrane. The enzyme catalyses D-sedoheptulose 7-phosphate + D-glyceraldehyde 3-phosphate = aldehydo-D-ribose 5-phosphate + D-xylulose 5-phosphate. It participates in carbohydrate biosynthesis; Calvin cycle. Its function is as follows. Catalyzes the reversible transfer of a two-carbon ketol group from fructose-6-phosphate or sedoheptulose-7-phosphate to glyceraldehyde-3-phosphate to yield xylulose-5-phosphate and erythrose-4-phosphate or ribose-5-phosphate, respectively. The chain is Transketolase, chloroplastic from Solanum tuberosum (Potato).